The primary structure comprises 274 residues: NH(3)-dependent NAD(+) synthetase (274 aa).

Residue 46 to 53 (GISGGQDS) participates in ATP binding. D52 is a binding site for Mg(2+). Residue R140 coordinates deamido-NAD(+). T160 lines the ATP pocket. E165 serves as a coordination point for Mg(2+). The deamido-NAD(+) site is built by K173 and D180. ATP contacts are provided by K189 and T211. Residue 260–261 (HK) participates in deamido-NAD(+) binding.

The protein belongs to the NAD synthetase family. Homodimer.

The catalysed reaction is deamido-NAD(+) + NH4(+) + ATP = AMP + diphosphate + NAD(+) + H(+). The protein operates within cofactor biosynthesis; NAD(+) biosynthesis; NAD(+) from deamido-NAD(+) (ammonia route): step 1/1. Functionally, catalyzes the ATP-dependent amidation of deamido-NAD to form NAD. Uses ammonia as a nitrogen source. The polypeptide is NH(3)-dependent NAD(+) synthetase (Streptococcus pneumoniae serotype 2 (strain D39 / NCTC 7466)).